The chain runs to 61 residues: UPF0181 protein KPN78578_22920 (61 aa).

Belongs to the UPF0181 family.

The protein is UPF0181 protein KPN78578_22920 of Klebsiella pneumoniae subsp. pneumoniae (strain ATCC 700721 / MGH 78578).